Here is an 895-residue protein sequence, read N- to C-terminus: Histone-lysine N-methyltransferase EZ3 (895 aa).

The span at 1–13 (MASSSKASDSSSQ) shows a compositional bias: low complexity. Disordered stretches follow at residues 1–30 (MASS…APAS) and 396–446 (SSVS…PGKR). The span at 396–422 (SSVSAEESTTPPSADTSETENASSDMP) shows a compositional bias: polar residues. The segment covering 427–436 (RKYKISKRGP) has biased composition (basic residues). Positions 528–578 (TLSCWSALERDLYLKGIEIFGKNSCLIARNLLSGMKTCMEVANYMYNNGAA) constitute an SANT domain. The 105-residue stretch at 628–732 (AGHPTVRKRI…SLGEPPARGD (105 aa)) folds into the CXC domain. Positions 747 to 862 (QRILLGRSDV…ASEELFYDYR (116 aa)) constitute an SET domain. The interval 870-895 (AWARRPEGSKKDEASVSHHRAHKVAR) is disordered. The segment covering 873–885 (RRPEGSKKDEASV) has biased composition (basic and acidic residues). Basic residues predominate over residues 886–895 (SHHRAHKVAR).

It belongs to the class V-like SAM-binding methyltransferase superfamily. Histone-lysine methyltransferase family. EZ subfamily. Widely expressed.

The protein resides in the nucleus. The catalysed reaction is L-lysyl(27)-[histone H3] + 3 S-adenosyl-L-methionine = N(6),N(6),N(6)-trimethyl-L-lysyl(27)-[histone H3] + 3 S-adenosyl-L-homocysteine + 3 H(+). Functionally, polycomb group (PcG) protein. Catalytic subunit of some PcG multiprotein complex, which methylates 'Lys-27' of histone H3, leading to transcriptional repression of the affected target genes. PcG proteins are not required to initiate repression, but to maintain it during later stages of development. This is Histone-lysine N-methyltransferase EZ3 (EZ3) from Zea mays (Maize).